Consider the following 209-residue polypeptide: MMNPWIDISQRLDEHIPVWPGDTPFSYRTRWNKAESGSVNVGQITMSTHTGTHIDAPFHFDNEGKRVIDLDLNIYIGPARVIHLSNPKKIGIDELQTIDLHGVTRLLIYTGAWTNRTTFPETIPYIDPPLAPYLKKYGVRLIGIDLPSVDPLTSKQLPAHHELHRCGIHILEGLVLDHVSPGDYELAALPLPLVNADGSPVRAALRKMG.

Substrate is bound at residue Trp-19. Zn(2+)-binding residues include His-49, His-53, and Asp-55. The Proton donor/acceptor role is filled by His-59. Zn(2+) contacts are provided by His-160 and Glu-172.

This sequence belongs to the Cyclase 1 superfamily. KynB family. As to quaternary structure, homodimer. Requires Zn(2+) as cofactor.

The catalysed reaction is N-formyl-L-kynurenine + H2O = L-kynurenine + formate + H(+). The protein operates within amino-acid degradation; L-tryptophan degradation via kynurenine pathway; L-kynurenine from L-tryptophan: step 2/2. Functionally, catalyzes the hydrolysis of N-formyl-L-kynurenine to L-kynurenine, the second step in the kynurenine pathway of tryptophan degradation. In Geobacillus thermodenitrificans (strain NG80-2), this protein is Kynurenine formamidase.